Consider the following 270-residue polypeptide: Methylthioribulose-1-phosphate dehydratase (270 aa).

A substrate-binding site is contributed by cysteine 122. Histidine 140 and histidine 142 together coordinate Zn(2+). Glutamate 165 acts as the Proton donor/acceptor in catalysis. Histidine 230 is a binding site for Zn(2+).

Belongs to the aldolase class II family. MtnB subfamily. Requires Zn(2+) as cofactor.

It localises to the cytoplasm. The catalysed reaction is 5-(methylsulfanyl)-D-ribulose 1-phosphate = 5-methylsulfanyl-2,3-dioxopentyl phosphate + H2O. The protein operates within amino-acid biosynthesis; L-methionine biosynthesis via salvage pathway; L-methionine from S-methyl-5-thio-alpha-D-ribose 1-phosphate: step 2/6. In terms of biological role, catalyzes the dehydration of methylthioribulose-1-phosphate (MTRu-1-P) into 2,3-diketo-5-methylthiopentyl-1-phosphate (DK-MTP-1-P). This Candida albicans (strain SC5314 / ATCC MYA-2876) (Yeast) protein is Methylthioribulose-1-phosphate dehydratase.